Reading from the N-terminus, the 419-residue chain is uncharacterized protein (419 aa).

The next 7 helical transmembrane spans lie at 16–36, 186–206, 235–255, 283–303, 318–338, 340–360, and 369–389; these read IMAKSFIISTVITVLLVLVVT, LVYIMLFVIYFSVIMYASMIA, LLGIGLVGITQLAIIIGAGSL, VIYAVIFFLLGYFLYATLAAF, ITPMTLLVVAGFMIAMFGLNA, DAGFITVTSFIPFFTPMIMFL, and FWQAAVGIGITLLTIVILAVI.

The protein to M.jannaschii MJ1024.

The protein resides in the cell membrane. This is an uncharacterized protein from Bacillus subtilis (strain 168).